We begin with the raw amino-acid sequence, 349 residues long: Isopentenyl-diphosphate delta-isomerase (349 aa).

6–7 (RK) is a binding site for substrate. Residues 62-64 (AMT), Ser-93, and Asn-122 contribute to the FMN site. Residue Gln-152 coordinates substrate. Residue Glu-153 participates in Mg(2+) binding. FMN-binding positions include Lys-184, Thr-214, 258-259 (GG), and 280-281 (AG).

Belongs to the IPP isomerase type 2 family. As to quaternary structure, homooctamer. Dimer of tetramers. FMN is required as a cofactor. Requires NADPH as cofactor. Mg(2+) serves as cofactor.

Its subcellular location is the cytoplasm. It catalyses the reaction isopentenyl diphosphate = dimethylallyl diphosphate. In terms of biological role, involved in the biosynthesis of isoprenoids. Catalyzes the 1,3-allylic rearrangement of the homoallylic substrate isopentenyl (IPP) to its allylic isomer, dimethylallyl diphosphate (DMAPP). This chain is Isopentenyl-diphosphate delta-isomerase, found in Bacillus mycoides (strain KBAB4) (Bacillus weihenstephanensis).